A 157-amino-acid polypeptide reads, in one-letter code: Peptide methionine sulfoxide reductase MsrA (157 aa).

C13 is a catalytic residue.

Belongs to the MsrA Met sulfoxide reductase family.

The enzyme catalyses L-methionyl-[protein] + [thioredoxin]-disulfide + H2O = L-methionyl-(S)-S-oxide-[protein] + [thioredoxin]-dithiol. The catalysed reaction is [thioredoxin]-disulfide + L-methionine + H2O = L-methionine (S)-S-oxide + [thioredoxin]-dithiol. Its function is as follows. Has an important function as a repair enzyme for proteins that have been inactivated by oxidation. Catalyzes the reversible oxidation-reduction of methionine sulfoxide in proteins to methionine. In Methanococcus maripaludis (strain C7 / ATCC BAA-1331), this protein is Peptide methionine sulfoxide reductase MsrA.